Here is a 93-residue protein sequence, read N- to C-terminus: DNA-binding protein HB1 (93 aa).

This sequence belongs to the bacterial histone-like protein family. As to quaternary structure, homodimer.

Its function is as follows. Histone-like DNA-binding protein which is capable of wrapping DNA to stabilize it, and thus to prevent its denaturation under extreme environmental conditions. This is DNA-binding protein HB1 (hup) from Bifidobacterium longum (strain NCC 2705).